The following is a 258-amino-acid chain: Tryptophan synthase alpha chain (258 aa).

Residues E52 and D63 each act as proton acceptor in the active site.

It belongs to the TrpA family. Tetramer of two alpha and two beta chains.

The catalysed reaction is (1S,2R)-1-C-(indol-3-yl)glycerol 3-phosphate + L-serine = D-glyceraldehyde 3-phosphate + L-tryptophan + H2O. It participates in amino-acid biosynthesis; L-tryptophan biosynthesis; L-tryptophan from chorismate: step 5/5. The alpha subunit is responsible for the aldol cleavage of indoleglycerol phosphate to indole and glyceraldehyde 3-phosphate. In Streptococcus pneumoniae (strain Taiwan19F-14), this protein is Tryptophan synthase alpha chain.